A 278-amino-acid polypeptide reads, in one-letter code: NH(3)-dependent NAD(+) synthetase (278 aa).

Residue 39-46 (GVSGGVDS) coordinates ATP. Mg(2+) is bound at residue aspartate 45. Arginine 121 contacts deamido-NAD(+). Threonine 141 is a binding site for ATP. Position 146 (glutamate 146) interacts with Mg(2+). Deamido-NAD(+)-binding residues include lysine 154 and aspartate 161. 2 residues coordinate ATP: lysine 170 and serine 192. 252–253 (HK) contacts deamido-NAD(+).

The protein belongs to the NAD synthetase family. In terms of assembly, homodimer.

The enzyme catalyses deamido-NAD(+) + NH4(+) + ATP = AMP + diphosphate + NAD(+) + H(+). The protein operates within cofactor biosynthesis; NAD(+) biosynthesis; NAD(+) from deamido-NAD(+) (ammonia route): step 1/1. Catalyzes the ATP-dependent amidation of deamido-NAD to form NAD. Uses ammonia as a nitrogen source. The chain is NH(3)-dependent NAD(+) synthetase from Saccharolobus solfataricus (strain ATCC 35092 / DSM 1617 / JCM 11322 / P2) (Sulfolobus solfataricus).